A 215-amino-acid chain; its full sequence is Large ribosomal subunit protein eL15 (215 aa).

The tract at residues 179–215 (GTVKHKWKKKEKEREQKKRHEATKYYRLQNYDKLPGK) is disordered. The span at 188–202 (KEKEREQKKRHEATK) shows a compositional bias: basic and acidic residues.

The protein belongs to the eukaryotic ribosomal protein eL15 family.

This Sulfurisphaera tokodaii (strain DSM 16993 / JCM 10545 / NBRC 100140 / 7) (Sulfolobus tokodaii) protein is Large ribosomal subunit protein eL15.